A 396-amino-acid chain; its full sequence is Adenosine 3'-phospho 5'-phosphosulfate transporter 2 (396 aa).

A disordered region spans residues Asn-22 to Ser-42. Residues Ala-27–Ser-42 show a composition bias toward polar residues. 2 positions are modified to phosphoserine: Ser-37 and Ser-40. An N-linked (GlcNAc...) asparagine glycan is attached at Asn-57. The next 10 membrane-spanning stretches (helical) occupy residues Cys-66–Val-86, Pro-91–Glu-111, Leu-140–Leu-160, Pro-163–Ile-183, Gly-189–Ala-209, Asn-216–Gly-236, Val-253–Gly-273, Phe-290–Leu-310, Ile-318–Phe-338, and Phe-342–Tyr-362.

This sequence belongs to the nucleotide-sugar transporter family. SLC35B subfamily.

The protein resides in the golgi apparatus membrane. Its function is as follows. Mediates the transport of adenosine 3'-phospho 5'-phosphosulfate (PAPS), from cytosol into Golgi. PAPS is a universal sulfuryl donor for sulfation events that take place in the Golgi. Essential for viability. Involved in glycosaminoglycan synthesis and the subsequent signaling. May be involved in hh and dpp signaling by controlling the sulfation of heparan sulfate (HS). The protein is Adenosine 3'-phospho 5'-phosphosulfate transporter 2 (Papst2) of Drosophila melanogaster (Fruit fly).